A 426-amino-acid polypeptide reads, in one-letter code: Cytochrome c biogenesis protein CcsB (426 aa).

The next 3 membrane-spanning stretches (helical) occupy residues 14–34 (LKIA…GTLI), 72–92 (SFWF…CSFR), and 162–182 (LGPI…TYGS).

Belongs to the Ccs1/CcsB family. In terms of assembly, may interact with CcsA.

The protein localises to the cellular thylakoid membrane. Its function is as follows. Required during biogenesis of c-type cytochromes (cytochrome c6 and cytochrome f) at the step of heme attachment. The protein is Cytochrome c biogenesis protein CcsB of Prochlorococcus marinus (strain NATL2A).